The following is a 354-amino-acid chain: Guanine nucleotide-binding protein G(t) subunit alpha-3 (354 aa).

The tract at residues 1 to 26 (MGIGISSESKESAKRSKELEKKLQED) is disordered. A lipid anchor (N-myristoyl glycine) is attached at Gly2. The segment covering 8 to 26 (ESKESAKRSKELEKKLQED) has biased composition (basic and acidic residues). The G-alpha domain maps to 32-354 (RTVKLLLLGA…KENLKDCGLF (323 aa)). The G1 motif stretch occupies residues 35-48 (KLLLLGAGESGKST). GTP is bound by residues 40–47 (GAGESGKS), 175–181 (LHSRVKT), 200–204 (DVGGQ), 269–272 (NKKD), and Ala326. Ser47 and Thr181 together coordinate Mg(2+). The tract at residues 173 to 181 (DVLHSRVKT) is G2 motif. Residues 196-205 (FRMFDVGGQR) are G3 motif. Positions 265–272 (VLFLNKKD) are G4 motif. The interval 324 to 329 (TCATDT) is G5 motif.

It belongs to the G-alpha family. G(i/o/t/z) subfamily. In terms of assembly, g proteins are composed of 3 units; alpha, beta and gamma, respectively GNAT3, GNB1 and GNG13 for Gustducin heterotrimer for bitter taste transduction. The alpha chain contains the guanine nucleotide binding site. Component of the TAS2R14-GNAT3 complex, consisting of TAS2R14, GNAT3, GNB1 and GNG2; within the complex interacts with TAS2R14; this complex plays a role in the perception of bitterness. Gustducin heterotrimer may also be composed of GNAT3, GNB3 and GNG13. In terms of tissue distribution, expressed in epithelial cells of taste buds of the circumvallate, foliate and fungiform. Detected in various region of the respiratory track. Expressed also in spermatozoa.

It localises to the cytoplasm. In terms of biological role, guanine nucleotide-binding protein (G protein) alpha subunit playing a prominent role in bitter and sweet taste transduction as well as in umami (monosodium glutamate, monopotassium glutamate, and inosine monophosphate) taste transduction. The polypeptide is Guanine nucleotide-binding protein G(t) subunit alpha-3 (GNAT3) (Bos taurus (Bovine)).